Reading from the N-terminus, the 57-residue chain is UPF0391 membrane protein Smed_4051 (57 aa).

2 consecutive transmembrane segments (helical) span residues 4-24 (WALIFFVISLIAGFLGFSGIS) and 33-53 (ILFYIAVIIFLVFLVLALAVG).

Belongs to the UPF0391 family.

The protein localises to the cell membrane. The chain is UPF0391 membrane protein Smed_4051 from Sinorhizobium medicae (strain WSM419) (Ensifer medicae).